A 579-amino-acid chain; its full sequence is MRPWLRHLVLQALRNSRAFCGSHGKPAPLPVPQKIVATWEAISLGRQLVPEYFNFAHDVLDVWSRLEEAGHRPPNPAFWWVNGTGAEIKWSFEELGKQSRKAANVLGGACGLQPGDRMMLVLPRLPEWWLVSVACMRTGTVMIPGVTQLTEKDLKYRLQASRAKSIITSDSLAPRVDAISAECPSLQTKLLVSDSSRPGWLNFRELLREASTEHNCMRTKSRDPLAIYFTSGTTGAPKMVEHSQSSYGLGFVASGRRWVALTESDIFWNTTDTGWVKAAWTLFSAWPNGSCIFVHELPRVDAKVILNTLSKFPITTLCCVPTIFRLLVQEDLTRYQFQSLRHCLTGGEALNPDVREKWKHQTGVELYEGYGQSETVVICANPKGMKIKSGSMGKASPPYDVQIVDDEGNVLPPGEEGNVAVRIRPTRPFCFFNCYLDNPEKTAASEQGDFYITGDRARMDKDGYFWFMGRNDDVINSSSYRIGPVEVESALAEHPAVLESAVVSSPDPIRGEVVKAFIVLTPAYSSHDPEALTRELQEHVKRVTAPYKYPRKVAFVSELPKTVSGKIQRSKLRSQEWGK.

The transit peptide at 1 to 26 (MRPWLRHLVLQALRNSRAFCGSHGKP) directs the protein to the mitochondrion. An N6-acetyllysine; alternate modification is found at lysine 97. Lysine 97 carries the N6-succinyllysine; alternate modification. Lysine 152 carries the N6-acetyllysine modification. 230–238 (TSGTTGAPK) serves as a coordination point for ATP. An N6-acetyllysine; alternate modification is found at lysine 303. Lysine 303 is modified (N6-succinyllysine; alternate). ATP-binding positions include 368 to 373 (EGYGQS), aspartate 455, arginine 470, and lysine 566.

It belongs to the ATP-dependent AMP-binding enzyme family. It depends on Mg(2+) as a cofactor. The cofactor is Mn(2+). In terms of tissue distribution, detected in kidney and liver.

The protein localises to the mitochondrion matrix. It carries out the reaction a medium-chain fatty acid + ATP + CoA = a medium-chain fatty acyl-CoA + AMP + diphosphate. Catalyzes the activation of fatty acids by CoA to produce an acyl-CoA, the first step in fatty acid metabolism. In Homo sapiens (Human), this protein is Acyl-coenzyme A synthetase ACSM5, mitochondrial (ACSM5).